The following is an 860-amino-acid chain: Serine/threonine-protein kinase greatwall (860 aa).

Residues 23 to 816 enclose the Protein kinase domain; the sequence is FVLVKPISRG…LKELKDHPFF (794 aa). ATP-binding positions include 29–37 and Lys52; that span reads ISRGAFGKV. Asp146 (proton acceptor) is an active-site residue. Residues 514 to 537 form a disordered region; sequence QGEEGGKAEPNSSSSTSPGDERNI. A Phosphothreonine; by CDK1 modification is found at Thr722. The region spanning 817–860 is the AGC-kinase C-terminal domain; the sequence is DGVDWENLHHQTMPFIPQPDNETDTSYFEARNTAQHLTVSGFSL.

It belongs to the protein kinase superfamily. AGC Ser/Thr protein kinase family. Post-translationally, phosphorylation at Thr-722 by CDK1 during M phase activates its kinase activity. Maximum phosphorylation occurs in prometaphase.

The protein resides in the cytoplasm. It localises to the cytoskeleton. It is found in the microtubule organizing center. The protein localises to the centrosome. Its subcellular location is the nucleus. The protein resides in the cleavage furrow. It carries out the reaction L-seryl-[protein] + ATP = O-phospho-L-seryl-[protein] + ADP + H(+). The catalysed reaction is L-threonyl-[protein] + ATP = O-phospho-L-threonyl-[protein] + ADP + H(+). Its function is as follows. Serine/threonine kinase that plays a key role in M phase by acting as a regulator of mitosis entry and maintenance. Acts by promoting the inactivation of protein phosphatase 2A (PP2A) during M phase: does not directly inhibit PP2A but acts by mediating phosphorylation and subsequent activation of arpp19 and ensa at 'Ser-62' and 'Ser-74', respectively. ARPP19 and ENSA are phosphatase inhibitors that specifically inhibit the ppp2r2d (PR55-delta) subunit of PP2A. Inactivation of PP2A during M phase is essential to keep cyclin-B1-CDK1 activity high. Following DNA damage, it is also involved in checkpoint recovery by being inhibited. May be involved in megakaryocyte differentiation. The protein is Serine/threonine-protein kinase greatwall (mastl) of Danio rerio (Zebrafish).